The chain runs to 270 residues: uncharacterized protein (270 aa).

Residues 1 to 10 (MFGLKVKDAT) show a composition bias toward basic and acidic residues. 2 disordered regions span residues 1 to 115 (MFGL…PTPW) and 215 to 236 (QTGF…QGEQ). 2 stretches are compositionally biased toward low complexity: residues 26 to 41 (SSSS…TQRG) and 98 to 113 (GTSP…GTPT).

The protein belongs to the adhesin P1 family.

This is an uncharacterized protein from Mycoplasma pneumoniae (strain ATCC 29342 / M129 / Subtype 1) (Mycoplasmoides pneumoniae).